Here is a 320-residue protein sequence, read N- to C-terminus: MRQTKTGILLANLGTPDAPTPEAVKRYLKQFLSDRRVVDTSRLLWWPLLRGVILPLRSPRVAKLYASVWMEGGSPLMVYSRQQQQALAQRLPETPVALGMSYGSPSLESAVNELLAEHVDHIVVLPLYPQFSCSTVGAVWDELARILARKRSIPGISFIRDYADNHDYINALANSVRASFAKHGEPDLLLLSYHGIPQRYADEGDDYPQRCRTTTRELASALGMAPEKVMMTFQSRFGREPWLMPYTDETLKMLGEKGVGHIQVMCPGFAADCLETLEEIAEQNREVFLGAGGKKYEYIPALNATPEHIEMMANLVAAYR.

2 residues coordinate Fe cation: histidine 194 and glutamate 275.

This sequence belongs to the ferrochelatase family. Monomer.

The protein localises to the cytoplasm. It catalyses the reaction heme b + 2 H(+) = protoporphyrin IX + Fe(2+). It functions in the pathway porphyrin-containing compound metabolism; protoheme biosynthesis; protoheme from protoporphyrin-IX: step 1/1. In terms of biological role, catalyzes the ferrous insertion into protoporphyrin IX. The protein is Ferrochelatase of Escherichia coli O8 (strain IAI1).